We begin with the raw amino-acid sequence, 468 residues long: 6-phosphogluconate dehydrogenase, NAD(+)-dependent, decarboxylating (468 aa).

NAD(+)-binding positions include 9–14, 32–34, 73–75, and Asn101; these read GLGVMG, NYT, and VTA. Substrate-binding positions include Asn101 and 127 to 129; that span reads SGG. Residue Lys181 is the Proton acceptor of the active site. Substrate is bound at residue 184-185; that stretch reads HN. The active-site Proton donor is the Glu188. Residues Tyr189, Lys259, Arg286, Arg445, and His451 each coordinate substrate.

It belongs to the 6-phosphogluconate dehydrogenase family. In terms of assembly, homodimer.

It catalyses the reaction 6-phospho-D-gluconate + NAD(+) = D-ribulose 5-phosphate + CO2 + NADH. Its function is as follows. Catalyzes the oxidative decarboxylation of 6-phosphogluconate to ribulose 5-phosphate and CO(2), with concomitant reduction of NAD to NADH. Does not contribute to oxidative pentose phosphate (PP) pathway fluxes during growth on glucose. The functional role of GntZ remains obscure. The sequence is that of 6-phosphogluconate dehydrogenase, NAD(+)-dependent, decarboxylating (gntZ) from Bacillus subtilis (strain 168).